Consider the following 750-residue polypeptide: MIIRSPEPEVKILVDRDPIKTSFEEWAKPGHFSRTIAKGPDTTTWIWNLHADAHDFDSHTNDLEEISRKVFSAHFGQLSIIFLWLSGMYFHGARFSNYEAWLSDPTHIGPSAQVVWPIVGQEILNGDVGGGFRGIQITSGFFQIWRASGITSELQLYCTAIGALVFAALMLFAGWFHYHKAAPKLAWFQDVESMLNHHLAGLLGLGSLSWAGHQVHVSLPINQFLNAGVDPKEIPLPHEFILNRDLLAQLYPSFAEGATPFFTLNWSKYAEFLTFRGGLDPVTGGLWLTDIAHHHLAIAILFLIAGHMYRTNWGIGHGIKDILEAHKGPFTGQGHKGLYEILTTSWHAQLSLNLAMLGSLTIVVAHHMYSMPPYPYLATDYGTQLSLFTHHMWIGGFLIVGAAAHAAIFMVRDYDPTTRYNDLLDRVLRHRDAIISHLNWVCIFLGFHSFGLYIHNDTMSALGRPQDMFSDTAIQLQPVFAQWIQNTHALAPAATAPGATASTSLTWGGGDLVAVGGKVALLPIPLGTADFLVHHIHAFTIHVTVLILLKGVLFARSSRLIPDKANLGFRFPCDGPGRGGTCQVSAWDHVFLGLFWMYNAISVVIFHFSWKMQSDVWGSISDQGVVTHITGGNFAQSSITINGWLRDFLWAQASQVIQSYGSSLSAYGLFFLGAHFVWAFSLMFLFSGRGYWQELIESIVWAHNKLKVAPATQPRALSIVQGRAVGVTHYLLGGIATTWAFFLARIIAVG.

Helical transmembrane passes span 70-93, 156-179, 195-219, 291-309, 346-369, 385-411, 433-455, and 531-549; these read VFSA…FHGA, LYCT…FHYH, LNHH…HVSL, IAHH…GHMY, WHAQ…HHMY, LSLF…IFMV, AIIS…LYIH, and FLVH…LILL. [4Fe-4S] cluster contacts are provided by Cys-573 and Cys-582. The next 2 membrane-spanning stretches (helical) occupy residues 589–610 and 664–686; these read HVFL…HFSW and LSAY…MFLF. His-675 lines the chlorophyll a' pocket. Residues Met-683 and Tyr-691 each coordinate chlorophyll a. Trp-692 lines the phylloquinone pocket. The helical transmembrane segment at 724-744 threads the bilayer; sequence AVGVTHYLLGGIATTWAFFLA.

It belongs to the PsaA/PsaB family. The PsaA/B heterodimer binds the P700 chlorophyll special pair and subsequent electron acceptors. PSI consists of a core antenna complex that captures photons, and an electron transfer chain that converts photonic excitation into a charge separation. The eukaryotic PSI reaction center is composed of at least 11 subunits. It depends on P700 is a chlorophyll a/chlorophyll a' dimer, A0 is one or more chlorophyll a, A1 is one or both phylloquinones and FX is a shared 4Fe-4S iron-sulfur center. as a cofactor.

It is found in the plastid. The protein resides in the chloroplast thylakoid membrane. The catalysed reaction is reduced [plastocyanin] + hnu + oxidized [2Fe-2S]-[ferredoxin] = oxidized [plastocyanin] + reduced [2Fe-2S]-[ferredoxin]. In terms of biological role, psaA and PsaB bind P700, the primary electron donor of photosystem I (PSI), as well as the electron acceptors A0, A1 and FX. PSI is a plastocyanin-ferredoxin oxidoreductase, converting photonic excitation into a charge separation, which transfers an electron from the donor P700 chlorophyll pair to the spectroscopically characterized acceptors A0, A1, FX, FA and FB in turn. Oxidized P700 is reduced on the lumenal side of the thylakoid membrane by plastocyanin. The polypeptide is Photosystem I P700 chlorophyll a apoprotein A1 (Eucalyptus globulus subsp. globulus (Tasmanian blue gum)).